The chain runs to 883 residues: DNA mismatch repair protein MutS (883 aa).

ATP is bound at residue 633–640; that stretch reads GPNMGGKS.

Belongs to the DNA mismatch repair MutS family.

Its function is as follows. This protein is involved in the repair of mismatches in DNA. It is possible that it carries out the mismatch recognition step. This protein has a weak ATPase activity. The sequence is that of DNA mismatch repair protein MutS from Bordetella pertussis (strain Tohama I / ATCC BAA-589 / NCTC 13251).